The sequence spans 557 residues: Dihydroxy-acid dehydratase (557 aa).

Cysteine 50 provides a ligand contact to [2Fe-2S] cluster. Aspartate 82 is a binding site for Mg(2+). Position 123 (cysteine 123) interacts with [2Fe-2S] cluster. The Mg(2+) site is built by aspartate 124 and lysine 125. Lysine 125 is modified (N6-carboxylysine). Cysteine 195 contributes to the [2Fe-2S] cluster binding site. Position 447 (glutamate 447) interacts with Mg(2+). Residue serine 473 is the Proton acceptor of the active site.

Belongs to the IlvD/Edd family. In terms of assembly, homodimer. The cofactor is [2Fe-2S] cluster. Mg(2+) serves as cofactor.

It catalyses the reaction (2R)-2,3-dihydroxy-3-methylbutanoate = 3-methyl-2-oxobutanoate + H2O. The enzyme catalyses (2R,3R)-2,3-dihydroxy-3-methylpentanoate = (S)-3-methyl-2-oxopentanoate + H2O. The protein operates within amino-acid biosynthesis; L-isoleucine biosynthesis; L-isoleucine from 2-oxobutanoate: step 3/4. It functions in the pathway amino-acid biosynthesis; L-valine biosynthesis; L-valine from pyruvate: step 3/4. Functionally, functions in the biosynthesis of branched-chain amino acids. Catalyzes the dehydration of (2R,3R)-2,3-dihydroxy-3-methylpentanoate (2,3-dihydroxy-3-methylvalerate) into 2-oxo-3-methylpentanoate (2-oxo-3-methylvalerate) and of (2R)-2,3-dihydroxy-3-methylbutanoate (2,3-dihydroxyisovalerate) into 2-oxo-3-methylbutanoate (2-oxoisovalerate), the penultimate precursor to L-isoleucine and L-valine, respectively. This chain is Dihydroxy-acid dehydratase, found in Nitrosomonas europaea (strain ATCC 19718 / CIP 103999 / KCTC 2705 / NBRC 14298).